A 303-amino-acid polypeptide reads, in one-letter code: MKITVLGCGALGQLWLTALCKQGHEVQGWLRVPQPYCSVNLVETDGSIFNESLTANDPDFLATSDLLLVTLKAWQVSDAVKSLASTLPVTTPILLIHNGMGTIEELQNIQQPLLMGTTTHAARRDGNVIIHVANGITHIGPARQQDGDYSYLADILQTVLPDVAWHNNIRAELWRKLAVNCVINPLTAIWNCPNGELRHHPQEIMQICEEVAAVIEREGHHTSAEDLRDYVMQVIDATAENISSMLQDIRALRHTEIDYINGFLLRRARAHGIAVPENTRLFEMVKRKESEYERIGTGLPRPW.

Residues 7-12 (GCGALG), N98, and A122 each bind NADP(+). N98 serves as a coordination point for substrate. The active-site Proton donor is the K176. Substrate contacts are provided by N180, N184, N194, and S244. E256 contributes to the NADP(+) binding site.

This sequence belongs to the ketopantoate reductase family. As to quaternary structure, monomer.

The protein resides in the cytoplasm. The enzyme catalyses (R)-pantoate + NADP(+) = 2-dehydropantoate + NADPH + H(+). It functions in the pathway cofactor biosynthesis; (R)-pantothenate biosynthesis; (R)-pantoate from 3-methyl-2-oxobutanoate: step 2/2. Its function is as follows. Catalyzes the NADPH-dependent reduction of ketopantoate into pantoic acid. The sequence is that of 2-dehydropantoate 2-reductase (panE) from Shigella flexneri.